Reading from the N-terminus, the 707-residue chain is DNA ligase (707 aa).

Residues 48-52 (DAEYD), 97-98 (SI), and E134 each bind NAD(+). K136 serves as the catalytic N6-AMP-lysine intermediate. 4 residues coordinate NAD(+): R157, E193, K320, and K344. Positions 438, 441, 456, and 462 each coordinate Zn(2+). Positions 621-707 (VAPKPLSGKT…DSPPDERIPA (87 aa)) constitute a BRCT domain.

The protein belongs to the NAD-dependent DNA ligase family. LigA subfamily. Mg(2+) is required as a cofactor. Requires Mn(2+) as cofactor.

The enzyme catalyses NAD(+) + (deoxyribonucleotide)n-3'-hydroxyl + 5'-phospho-(deoxyribonucleotide)m = (deoxyribonucleotide)n+m + AMP + beta-nicotinamide D-nucleotide.. Its function is as follows. DNA ligase that catalyzes the formation of phosphodiester linkages between 5'-phosphoryl and 3'-hydroxyl groups in double-stranded DNA using NAD as a coenzyme and as the energy source for the reaction. It is essential for DNA replication and repair of damaged DNA. The chain is DNA ligase from Polaromonas naphthalenivorans (strain CJ2).